The sequence spans 145 residues: D-aminoacyl-tRNA deacylase (145 aa).

Residues 137 to 138 (GP) carry the Gly-cisPro motif, important for rejection of L-amino acids motif.

It belongs to the DTD family. Homodimer.

The protein localises to the cytoplasm. It catalyses the reaction glycyl-tRNA(Ala) + H2O = tRNA(Ala) + glycine + H(+). It carries out the reaction a D-aminoacyl-tRNA + H2O = a tRNA + a D-alpha-amino acid + H(+). Functionally, an aminoacyl-tRNA editing enzyme that deacylates mischarged D-aminoacyl-tRNAs. Also deacylates mischarged glycyl-tRNA(Ala), protecting cells against glycine mischarging by AlaRS. Acts via tRNA-based rather than protein-based catalysis; rejects L-amino acids rather than detecting D-amino acids in the active site. By recycling D-aminoacyl-tRNA to D-amino acids and free tRNA molecules, this enzyme counteracts the toxicity associated with the formation of D-aminoacyl-tRNA entities in vivo and helps enforce protein L-homochirality. The sequence is that of D-aminoacyl-tRNA deacylase from Pseudomonas putida (strain W619).